Reading from the N-terminus, the 187-residue chain is Large ribosomal subunit protein uL5 (187 aa).

The protein belongs to the universal ribosomal protein uL5 family. Part of the 50S ribosomal subunit; part of the 5S rRNA/L5/L18/L25 subcomplex. Contacts the 5S rRNA and the P site tRNA. Forms a bridge to the 30S subunit in the 70S ribosome.

This is one of the proteins that bind and probably mediate the attachment of the 5S RNA into the large ribosomal subunit, where it forms part of the central protuberance. In the 70S ribosome it contacts protein S13 of the 30S subunit (bridge B1b), connecting the 2 subunits; this bridge is implicated in subunit movement. Contacts the P site tRNA; the 5S rRNA and some of its associated proteins might help stabilize positioning of ribosome-bound tRNAs. This is Large ribosomal subunit protein uL5 from Corynebacterium diphtheriae (strain ATCC 700971 / NCTC 13129 / Biotype gravis).